A 557-amino-acid chain; its full sequence is CDP-diacylglycerol--glycerol-3-phosphate 3-phosphatidyltransferase, mitochondrial (557 aa).

The transit peptide at 1-25 directs the protein to the mitochondrion; it reads MAAAGGAALWRRLAAWLPRGPPGLA. An ATP-binding site is contributed by 121 to 128; sequence ASLYLGTG. One can recognise a PLD phosphodiesterase 1 domain in the interval 212 to 238; it reads TIGLQHIKVYLFDDNVILSGANLSDLY. Residues H217, K219, and D224 contribute to the active site. The segment at 322–346 is disordered; it reads TFHSSQQGSSMLPQHDSEASEGLKP. A compositionally biased stretch (polar residues) spans 323-333; it reads FHSSQQGSSML. The span at 336–346 shows a compositional bias: basic and acidic residues; the sequence is HDSEASEGLKP. The region spanning 461 to 494 is the PLD phosphodiesterase 2 domain; the sequence is AGWTFHAKGLWLYLAGSSLPCLTLIGSPNFGYRS.

It belongs to the CDP-alcohol phosphatidyltransferase class-II family.

The protein localises to the mitochondrion. The catalysed reaction is a CDP-1,2-diacyl-sn-glycerol + sn-glycerol 3-phosphate = a 1,2-diacyl-sn-glycero-3-phospho-(1'-sn-glycero-3'-phosphate) + CMP + H(+). Its pathway is phospholipid metabolism; phosphatidylglycerol biosynthesis; phosphatidylglycerol from CDP-diacylglycerol: step 1/2. With respect to regulation, activated by calcium and magnesium and inhibited by other bivalent cations. Functionally, functions in the biosynthesis of the anionic phospholipids phosphatidylglycerol and cardiolipin. In Gallus gallus (Chicken), this protein is CDP-diacylglycerol--glycerol-3-phosphate 3-phosphatidyltransferase, mitochondrial (PGS1).